The chain runs to 633 residues: MPSIHVMSPTLASQVAAGEVVERPASVVKELVENSLDAGAKFVRVEIRRGGVGMIKVTDDGSGMSRADAELCTKRHATSKLSSLEELFEITHLGFRGEALPSIASVSRFKLCTRQQQDLEGWEIRIDGGLEHEPRSSGVSPGTAIEVADLFYNTPARRKFLKSAETEASHVEHQIRLHALAYPQVRFAYKRDDQLVFDLPATADLRVRISALTDAATAAALIPIETTIGPGISITGFLLPLSEARRTRKGQYVFMNTRPVEDQLINRAIRDGYGGFPTGLHPALFLYMEVEPALVDVNVHPAKKEVRFRRSADVVNTIVEAIANTLQKHARQEIHAAAAPEPERTLPPAHSTTAPYGEIPARSTNPGSAFPAAARPAPASSAAQPPLSSSAKQSHGAVPPPTLRAIPLKQVPATQGKLDFHRQEDEETARNAHENAALERDASAGFSYLGTLRQQFALFETPEGLVLMHPKAARERIIFERLRARREAPMPSQQLLDPVVLDLDPRDFAVIRQFAPHFDQAGMAVTPFGQNTIRIESIPALLELENARAFLLELVDRLTQSEFSRNAKRVAYETFIGEFARKSAWRERISPHRAPAILKDLLACEVPYCTPGGKPTLVNYSVPEIKRKFGLQA.

The segment at 338–407 (AAPEPERTLP…VPPPTLRAIP (70 aa)) is disordered. A compositionally biased stretch (low complexity) spans 366-391 (PGSAFPAAARPAPASSAAQPPLSSSA).

It belongs to the DNA mismatch repair MutL/HexB family.

Its function is as follows. This protein is involved in the repair of mismatches in DNA. It is required for dam-dependent methyl-directed DNA mismatch repair. May act as a 'molecular matchmaker', a protein that promotes the formation of a stable complex between two or more DNA-binding proteins in an ATP-dependent manner without itself being part of a final effector complex. This chain is DNA mismatch repair protein MutL, found in Akkermansia muciniphila (strain ATCC BAA-835 / DSM 22959 / JCM 33894 / BCRC 81048 / CCUG 64013 / CIP 107961 / Muc).